A 34-amino-acid chain; its full sequence is Photosystem II reaction center protein M (34 aa).

The helical transmembrane segment at 5-25 threads the bilayer; it reads ILGLTATALFIIIPTSFLLIL.

The protein belongs to the PsbM family. In terms of assembly, PSII is composed of 1 copy each of membrane proteins PsbA, PsbB, PsbC, PsbD, PsbE, PsbF, PsbH, PsbI, PsbJ, PsbK, PsbL, PsbM, PsbT, PsbX, PsbY, PsbZ, Psb30/Ycf12, at least 3 peripheral proteins of the oxygen-evolving complex and a large number of cofactors. It forms dimeric complexes.

It is found in the plastid. It localises to the chloroplast thylakoid membrane. In terms of biological role, one of the components of the core complex of photosystem II (PSII). PSII is a light-driven water:plastoquinone oxidoreductase that uses light energy to abstract electrons from H(2)O, generating O(2) and a proton gradient subsequently used for ATP formation. It consists of a core antenna complex that captures photons, and an electron transfer chain that converts photonic excitation into a charge separation. This subunit is found at the monomer-monomer interface. The protein is Photosystem II reaction center protein M of Stigeoclonium helveticum (Green alga).